A 158-amino-acid polypeptide reads, in one-letter code: Arginine repressor (158 aa).

It belongs to the ArgR family.

The protein localises to the cytoplasm. The protein operates within amino-acid biosynthesis; L-arginine biosynthesis [regulation]. Functionally, regulates arginine biosynthesis genes. In Anaeromyxobacter sp. (strain Fw109-5), this protein is Arginine repressor.